The primary structure comprises 611 residues: Elongation factor 4 (611 aa).

Positions 11 to 193 (EKIRNFSIIA…QVVEYVPAPS (183 aa)) constitute a tr-type G domain. GTP is bound by residues 23–28 (DHGKST) and 140–143 (NKID).

It belongs to the TRAFAC class translation factor GTPase superfamily. Classic translation factor GTPase family. LepA subfamily.

The protein resides in the cell membrane. It catalyses the reaction GTP + H2O = GDP + phosphate + H(+). Functionally, required for accurate and efficient protein synthesis under certain stress conditions. May act as a fidelity factor of the translation reaction, by catalyzing a one-codon backward translocation of tRNAs on improperly translocated ribosomes. Back-translocation proceeds from a post-translocation (POST) complex to a pre-translocation (PRE) complex, thus giving elongation factor G a second chance to translocate the tRNAs correctly. Binds to ribosomes in a GTP-dependent manner. The polypeptide is Elongation factor 4 (Enterococcus faecalis (strain ATCC 700802 / V583)).